Here is a 122-residue protein sequence, read N- to C-terminus: Large ribosomal subunit protein uL14c (122 aa).

It belongs to the universal ribosomal protein uL14 family. In terms of assembly, part of the 50S ribosomal subunit.

Its subcellular location is the plastid. It is found in the chloroplast. Functionally, binds to 23S rRNA. This is Large ribosomal subunit protein uL14c from Manihot esculenta (Cassava).